We begin with the raw amino-acid sequence, 117 residues long: Glycine cleavage system H-like protein (117 aa).

In terms of domain architecture, Lipoyl-binding spans Ile21–Gln103. Lys62 carries the post-translational modification N6-lipoyllysine.

Belongs to the GcvH family. The cofactor is (R)-lipoate.

This is Glycine cleavage system H-like protein from Chlamydia trachomatis serovar D (strain ATCC VR-885 / DSM 19411 / UW-3/Cx).